We begin with the raw amino-acid sequence, 360 residues long: Protein Wnt-2 (360 aa).

Residues 1–25 (MNAPLGGIWLWLPLLLTWLTPEVNS) form the signal peptide. 11 disulfides stabilise this stretch: Cys-76-Cys-87, Cys-127-Cys-135, Cys-137-Cys-157, Cys-206-Cys-220, Cys-208-Cys-215, Cys-278-Cys-309, Cys-294-Cys-304, Cys-308-Cys-348, Cys-324-Cys-339, Cys-326-Cys-336, and Cys-331-Cys-332. Ser-212 is lipidated: O-palmitoleoyl serine; by PORCN. Asn-295 carries N-linked (GlcNAc...) asparagine glycosylation.

Belongs to the Wnt family. Palmitoleoylation is required for efficient binding to frizzled receptors. Depalmitoleoylation leads to Wnt signaling pathway inhibition.

It is found in the secreted. The protein resides in the extracellular space. It localises to the extracellular matrix. Ligand for members of the frizzled family of seven transmembrane receptors. Functions in the canonical Wnt signaling pathway that results in activation of transcription factors of the TCF/LEF family. Functions as a upstream regulator of FGF10 expression. Plays an important role in embryonic lung development. May contribute to embryonic brain development by regulating the proliferation of dopaminergic precursors and neurons. This Gorilla gorilla gorilla (Western lowland gorilla) protein is Protein Wnt-2 (WNT2).